The primary structure comprises 389 residues: Large envelope protein (389 aa).

2 stretches are compositionally biased toward polar residues: residues 1–10 and 85–95; these read MGQNLSTSNP and STNRQTGRQPT. Disordered regions lie at residues 1-54 and 73-106; these read MGQN…AFGL and ILHT…DTHP. Glycine 2 is lipidated: N-myristoyl glycine; by host. A pre-S1 region spans residues 2–108; it reads GQNLSTSNPL…PPLRDTHPQA (107 aa). The pre-S stretch occupies residues 2–163; that stretch reads GQNLSTSNPL…FSRIGDPVTN (162 aa). Residues 2–170 are Virion surface; in external conformation-facing; sequence GQNLSTSNPL…VTNMENITSG (169 aa). The Intravirion; in internal conformation portion of the chain corresponds to 2-242; the sequence is GQNLSTSNPL…PGYRWMCLRG (241 aa). A pre-S2 region spans residues 109–163; that stretch reads VQWNSTTFHQTLQDPRVRGLYFPAGGSSSGTVNPVPTTASPLSSIFSRIGDPVTN. Residues 171 to 191 traverse the membrane as a helical segment; sequence FLGPLLVLQAGFFLLTRILTI. Residues 192 to 242 lie on the Intravirion; in external conformation side of the membrane; sequence PQSLDSWWTSLNFRGGTTVCLGQNSQSPTSNHSPTSCPPTCPGYRWMCLRG. The chain crosses the membrane as a helical span at residues 243 to 263; it reads FIIFLFILLLCLIFLLVLLEY. Residues 264–337 are Virion surface-facing; that stretch reads QGMLHVCPLI…WASVRFSWLS (74 aa). Residue asparagine 309 is glycosylated (N-linked (GlcNAc...) asparagine; by host). A helical membrane pass occupies residues 338–358; that stretch reads LLVPFVQWFVGLSPTVWLSAI. The Intravirion segment spans residues 359-364; it reads WMMWYW. Residues 365-387 form a helical membrane-spanning segment; it reads GPSLYSILSPFLPLLPIFFCLWV. Topologically, residues 388-389 are virion surface; that stretch reads YI.

The protein belongs to the orthohepadnavirus major surface antigen family. As to quaternary structure, li-HBsAg interacts with capsid protein and with HDV Large delta antigen. Isoform M associates with host chaperone CANX through its pre-S2 N glycan. This association may be essential for M proper secretion. Post-translationally, isoform M is N-terminally acetylated by host at a ratio of 90%, and N-glycosylated by host at the pre-S2 region. In terms of processing, myristoylated.

The protein localises to the virion membrane. Functionally, the large envelope protein exists in two topological conformations, one which is termed 'external' or Le-HBsAg and the other 'internal' or Li-HBsAg. In its external conformation the protein attaches the virus to cell receptors and thereby initiating infection. This interaction determines the species specificity and liver tropism. This attachment induces virion internalization predominantly through caveolin-mediated endocytosis. The large envelope protein also assures fusion between virion membrane and endosomal membrane. In its internal conformation the protein plays a role in virion morphogenesis and mediates the contact with the nucleocapsid like a matrix protein. In terms of biological role, the middle envelope protein plays an important role in the budding of the virion. It is involved in the induction of budding in a nucleocapsid independent way. In this process the majority of envelope proteins bud to form subviral lipoprotein particles of 22 nm of diameter that do not contain a nucleocapsid. This chain is Large envelope protein, found in Homo sapiens (Human).